Here is a 122-residue protein sequence, read N- to C-terminus: Large ribosomal subunit protein uL14 (122 aa).

It belongs to the universal ribosomal protein uL14 family. As to quaternary structure, part of the 50S ribosomal subunit. Forms a cluster with proteins L3 and L19. In the 70S ribosome, L14 and L19 interact and together make contacts with the 16S rRNA in bridges B5 and B8.

Its function is as follows. Binds to 23S rRNA. Forms part of two intersubunit bridges in the 70S ribosome. This Methylobacterium sp. (strain 4-46) protein is Large ribosomal subunit protein uL14.